The sequence spans 127 residues: Flagellar assembly factor FliW (127 aa).

The protein belongs to the FliW family. Interacts with translational regulator CsrA and flagellin(s).

It is found in the cytoplasm. Acts as an anti-CsrA protein, binds CsrA and prevents it from repressing translation of its target genes, one of which is flagellin. Binds to flagellin and participates in the assembly of the flagellum. In Campylobacter concisus (strain 13826), this protein is Flagellar assembly factor FliW.